The chain runs to 106 residues: Small ribosomal subunit protein uS10 (106 aa).

It belongs to the universal ribosomal protein uS10 family. Part of the 30S ribosomal subunit.

Its function is as follows. Involved in the binding of tRNA to the ribosomes. The polypeptide is Small ribosomal subunit protein uS10 (Mesomycoplasma hyopneumoniae (strain 232) (Mycoplasma hyopneumoniae)).